We begin with the raw amino-acid sequence, 411 residues long: Exodeoxyribonuclease 7 large subunit (411 aa).

The protein belongs to the XseA family. Heterooligomer composed of large and small subunits.

The protein localises to the cytoplasm. It catalyses the reaction Exonucleolytic cleavage in either 5'- to 3'- or 3'- to 5'-direction to yield nucleoside 5'-phosphates.. In terms of biological role, bidirectionally degrades single-stranded DNA into large acid-insoluble oligonucleotides, which are then degraded further into small acid-soluble oligonucleotides. The polypeptide is Exodeoxyribonuclease 7 large subunit (Mycobacterium sp. (strain KMS)).